A 304-amino-acid polypeptide reads, in one-letter code: UDP-3-O-acyl-N-acetylglucosamine deacetylase (304 aa).

Zn(2+) is bound by residues histidine 79, histidine 238, and aspartate 242. Histidine 265 (proton donor) is an active-site residue.

It belongs to the LpxC family. Zn(2+) is required as a cofactor.

It catalyses the reaction a UDP-3-O-[(3R)-3-hydroxyacyl]-N-acetyl-alpha-D-glucosamine + H2O = a UDP-3-O-[(3R)-3-hydroxyacyl]-alpha-D-glucosamine + acetate. Its pathway is glycolipid biosynthesis; lipid IV(A) biosynthesis; lipid IV(A) from (3R)-3-hydroxytetradecanoyl-[acyl-carrier-protein] and UDP-N-acetyl-alpha-D-glucosamine: step 2/6. Catalyzes the hydrolysis of UDP-3-O-myristoyl-N-acetylglucosamine to form UDP-3-O-myristoylglucosamine and acetate, the committed step in lipid A biosynthesis. In Laribacter hongkongensis (strain HLHK9), this protein is UDP-3-O-acyl-N-acetylglucosamine deacetylase.